An 89-amino-acid chain; its full sequence is Acylphosphatase (89 aa).

The Acylphosphatase-like domain maps to 3-89; sequence HIHLQVFGRV…NQKLSDFRSI (87 aa). Catalysis depends on residues Arg-18 and Asn-36.

Belongs to the acylphosphatase family.

It carries out the reaction an acyl phosphate + H2O = a carboxylate + phosphate + H(+). The chain is Acylphosphatase (acyP) from Staphylococcus aureus (strain Mu3 / ATCC 700698).